The following is a 118-amino-acid chain: UPF0231 protein PM0457 (118 aa).

The protein belongs to the UPF0231 family.

In Pasteurella multocida (strain Pm70), this protein is UPF0231 protein PM0457.